Consider the following 329-residue polypeptide: tRNA N6-adenosine threonylcarbamoyltransferase (329 aa).

2 residues coordinate Fe cation: His107 and His111. Substrate is bound by residues 129–133 (LVSGG), Asp162, Gly175, and Asn268. Asp296 serves as a coordination point for Fe cation.

It belongs to the KAE1 / TsaD family. Fe(2+) serves as cofactor.

It is found in the cytoplasm. It carries out the reaction L-threonylcarbamoyladenylate + adenosine(37) in tRNA = N(6)-L-threonylcarbamoyladenosine(37) in tRNA + AMP + H(+). Functionally, required for the formation of a threonylcarbamoyl group on adenosine at position 37 (t(6)A37) in tRNAs that read codons beginning with adenine. Is involved in the transfer of the threonylcarbamoyl moiety of threonylcarbamoyl-AMP (TC-AMP) to the N6 group of A37, together with TsaE and TsaB. TsaD likely plays a direct catalytic role in this reaction. The sequence is that of tRNA N6-adenosine threonylcarbamoyltransferase from Nitratiruptor sp. (strain SB155-2).